We begin with the raw amino-acid sequence, 147 residues long: uncharacterized protein (147 aa).

In terms of domain architecture, HTH asnC-type spans 2–63 (LDELDKKIIG…KLNYENIGYD (62 aa)). Positions 21 to 40 (YREIAKELNVAVGTIYNRIK) form a DNA-binding region, H-T-H motif.

This is an uncharacterized protein from Pyrococcus abyssi (strain GE5 / Orsay).